A 447-amino-acid polypeptide reads, in one-letter code: Tol-Pal system protein TolB (447 aa).

A signal peptide spans 1 to 29; the sequence is MITMSRIRSLAAFAVFVILGVAAVLPAQA.

Belongs to the TolB family. As to quaternary structure, the Tol-Pal system is composed of five core proteins: the inner membrane proteins TolA, TolQ and TolR, the periplasmic protein TolB and the outer membrane protein Pal. They form a network linking the inner and outer membranes and the peptidoglycan layer.

Its subcellular location is the periplasm. Functionally, part of the Tol-Pal system, which plays a role in outer membrane invagination during cell division and is important for maintaining outer membrane integrity. This chain is Tol-Pal system protein TolB, found in Paramagnetospirillum magneticum (strain ATCC 700264 / AMB-1) (Magnetospirillum magneticum).